Here is a 186-residue protein sequence, read N- to C-terminus: Large ribosomal subunit protein uL22 (186 aa).

The tract at residues 160–186 (AAENEPAKKKLSKKKLQRQKEKMMRNE) is disordered. The segment covering 177–186 (RQKEKMMRNE) has biased composition (basic and acidic residues).

Belongs to the universal ribosomal protein uL22 family.

The sequence is that of Large ribosomal subunit protein uL22 (RpL17) from Aedes aegypti (Yellowfever mosquito).